Consider the following 269-residue polypeptide: Formamidopyrimidine-DNA glycosylase (269 aa).

Catalysis depends on Pro2, which acts as the Schiff-base intermediate with DNA. The active-site Proton donor is the Glu3. Catalysis depends on Lys57, which acts as the Proton donor; for beta-elimination activity. Residues His90, Arg109, and Arg150 each contribute to the DNA site. The FPG-type zinc-finger motif lies at 235 to 269 (QVYGRKGEPCRVCGTPVVATKHAQRATFYCRHCQK). Arg259 functions as the Proton donor; for delta-elimination activity in the catalytic mechanism.

The protein belongs to the FPG family. As to quaternary structure, monomer. The cofactor is Zn(2+).

The catalysed reaction is Hydrolysis of DNA containing ring-opened 7-methylguanine residues, releasing 2,6-diamino-4-hydroxy-5-(N-methyl)formamidopyrimidine.. It catalyses the reaction 2'-deoxyribonucleotide-(2'-deoxyribose 5'-phosphate)-2'-deoxyribonucleotide-DNA = a 3'-end 2'-deoxyribonucleotide-(2,3-dehydro-2,3-deoxyribose 5'-phosphate)-DNA + a 5'-end 5'-phospho-2'-deoxyribonucleoside-DNA + H(+). In terms of biological role, involved in base excision repair of DNA damaged by oxidation or by mutagenic agents. Acts as a DNA glycosylase that recognizes and removes damaged bases. Has a preference for oxidized purines, such as 7,8-dihydro-8-oxoguanine (8-oxoG). Has AP (apurinic/apyrimidinic) lyase activity and introduces nicks in the DNA strand. Cleaves the DNA backbone by beta-delta elimination to generate a single-strand break at the site of the removed base with both 3'- and 5'-phosphates. This is Formamidopyrimidine-DNA glycosylase from Salmonella arizonae (strain ATCC BAA-731 / CDC346-86 / RSK2980).